A 761-amino-acid chain; its full sequence is BMP/retinoic acid-inducible neural-specific protein 1 (761 aa).

The first 22 residues, 1-22 (MNWRLVEFLYLLFIWDHILVQP), serve as a signal peptide directing secretion. In terms of domain architecture, MACPF spans 68–251 (RYKIYREFAR…FVQSALSYIM (184 aa)). 7 N-linked (GlcNAc...) asparagine glycosylation sites follow: Asn-156, Asn-433, Asn-443, Asn-553, Asn-599, Asn-631, and Asn-677.

The protein belongs to the BRINP family.

It is found in the cytoplasm. Plays a role in neurogenesis and brain development. May suppress cell cycle progression in postmitotic neurons by inhibiting G1/S transition. This chain is BMP/retinoic acid-inducible neural-specific protein 1 (BRINP1), found in Gallus gallus (Chicken).